The sequence spans 159 residues: Ribosome maturation factor RimM (159 aa).

The PRC barrel domain occupies 86-159 (SDAFHLPKLI…IHIETIEGLI (74 aa)).

This sequence belongs to the RimM family. Binds ribosomal protein uS19.

It localises to the cytoplasm. In terms of biological role, an accessory protein needed during the final step in the assembly of 30S ribosomal subunit, possibly for assembly of the head region. Essential for efficient processing of 16S rRNA. May be needed both before and after RbfA during the maturation of 16S rRNA. It has affinity for free ribosomal 30S subunits but not for 70S ribosomes. The protein is Ribosome maturation factor RimM of Acholeplasma laidlawii (strain PG-8A).